We begin with the raw amino-acid sequence, 385 residues long: Endoglucanase 1 (385 aa).

The N-terminal stretch at 1-17 (MKLVFSALASLLSGASA) is a signal peptide. Residues asparagine 93 and asparagine 140 are each glycosylated (N-linked (GlcNAc...) asparagine). Glutamate 176 functions as the Proton donor in the catalytic mechanism. Asparagine 200 and asparagine 237 each carry an N-linked (GlcNAc...) asparagine glycan. Glutamate 284 functions as the Nucleophile in the catalytic mechanism. Residues asparagine 289 and asparagine 331 are each glycosylated (N-linked (GlcNAc...) asparagine).

The protein belongs to the glycosyl hydrolase 5 (cellulase A) family.

It carries out the reaction Endohydrolysis of (1-&gt;4)-beta-D-glucosidic linkages in cellulose, lichenin and cereal beta-D-glucans.. Its pathway is glycan metabolism; cellulose degradation. In terms of biological role, active towards carboxymethyl cellulose. The polypeptide is Endoglucanase 1 (eg 1) (Robillarda sp. (strain Y-20)).